A 294-amino-acid polypeptide reads, in one-letter code: Phosphatidylglycerol--prolipoprotein diacylglyceryl transferase (294 aa).

7 helical membrane passes run 21–41 (VSLHWYGMMYLIGFVFALWLA), 60–80 (LLYVGFVGVFIGGRLGYVLFY), 96–116 (WDGGMSFHGGLIGVICAMIWF), 124–144 (FFQVADFVAPLIPFGLGLGRI), 199–219 (SQLYEMFLEGVVLFIILNIFV), 226–246 (GSVSGLFLIGYGAFRIIVEFF), and 259–279 (ISMGQILSIPMIILGIIFMVW). An a 1,2-diacyl-sn-glycero-3-phospho-(1'-sn-glycerol)-binding site is contributed by Arg143.

It belongs to the Lgt family.

The protein localises to the cell inner membrane. It carries out the reaction L-cysteinyl-[prolipoprotein] + a 1,2-diacyl-sn-glycero-3-phospho-(1'-sn-glycerol) = an S-1,2-diacyl-sn-glyceryl-L-cysteinyl-[prolipoprotein] + sn-glycerol 1-phosphate + H(+). Its pathway is protein modification; lipoprotein biosynthesis (diacylglyceryl transfer). Its function is as follows. Catalyzes the transfer of the diacylglyceryl group from phosphatidylglycerol to the sulfhydryl group of the N-terminal cysteine of a prolipoprotein, the first step in the formation of mature lipoproteins. The polypeptide is Phosphatidylglycerol--prolipoprotein diacylglyceryl transferase (Proteus mirabilis (strain HI4320)).